Here is a 277-residue protein sequence, read N- to C-terminus: Diaminopimelate epimerase (277 aa).

Substrate-binding residues include Asn11 and Asn62. The Proton donor role is filled by Cys71. Substrate is bound by residues 72–73 (GN), Asn160, Asn193, and 211–212 (ER). Cys220 acts as the Proton acceptor in catalysis. Residue 221-222 (GT) coordinates substrate.

The protein belongs to the diaminopimelate epimerase family. In terms of assembly, homodimer.

The protein resides in the cytoplasm. It catalyses the reaction (2S,6S)-2,6-diaminopimelate = meso-2,6-diaminopimelate. The protein operates within amino-acid biosynthesis; L-lysine biosynthesis via DAP pathway; DL-2,6-diaminopimelate from LL-2,6-diaminopimelate: step 1/1. Catalyzes the stereoinversion of LL-2,6-diaminopimelate (L,L-DAP) to meso-diaminopimelate (meso-DAP), a precursor of L-lysine. In Methanococcus maripaludis (strain C5 / ATCC BAA-1333), this protein is Diaminopimelate epimerase.